We begin with the raw amino-acid sequence, 80 residues long: Peroxidase (80 aa).

The disordered stretch occupies residues 56–80 (DANEAEANSDLPGFNSSRSELEAAF). Position 67 (Pro67) interacts with substrate. Asn70 carries an N-linked (GlcNAc...) asparagine glycan.

It belongs to the peroxidase family. Classical plant (class III) peroxidase subfamily. It depends on Ca(2+) as a cofactor. Heme b is required as a cofactor.

The enzyme catalyses 2 a phenolic donor + H2O2 = 2 a phenolic radical donor + 2 H2O. Removal of H(2)O(2), oxidation of toxic reductants, biosynthesis and degradation of lignin, suberization, auxin catabolism, response to environmental stresses such as wounding, pathogen attack and oxidative stress. These functions might be dependent on each isozyme/isoform in each plant tissue. This is Peroxidase from Triticum aestivum (Wheat).